The following is a 246-amino-acid chain: Adenosine 5'-phosphosulfate reductase (246 aa).

Cysteine 131, cysteine 132, cysteine 214, and cysteine 217 together coordinate [4Fe-4S] cluster. The active-site Nucleophile; cysteine thiosulfonate intermediate is the cysteine 242.

This sequence belongs to the PAPS reductase family. CysH subfamily. The cofactor is [4Fe-4S] cluster.

Its subcellular location is the cytoplasm. The catalysed reaction is [thioredoxin]-disulfide + sulfite + AMP + 2 H(+) = adenosine 5'-phosphosulfate + [thioredoxin]-dithiol. It participates in sulfur metabolism; hydrogen sulfide biosynthesis; sulfite from sulfate. In terms of biological role, catalyzes the formation of sulfite from adenosine 5'-phosphosulfate (APS) using thioredoxin as an electron donor. The polypeptide is Adenosine 5'-phosphosulfate reductase (Neisseria meningitidis serogroup B (strain ATCC BAA-335 / MC58)).